Reading from the N-terminus, the 739-residue chain is Nuclear pore complex protein NUP62 (739 aa).

Tandem repeats lie at residues 6-7, 17-18, 50-51, 52-53, 68-69, 70-71, 78-79, 80-81, 91-92, 93-94, 108-109, 110-111, 124-125, 141-142, 159-160, 174-175, 186-187, 207-208, and 221-222. The tract at residues 6–450 is 26 X 2 AA repeats of F-G; it reads FGQSNSVGGF…AATFSTTGFG (445 aa). Residues 18 to 67 form a disordered region; sequence GSSSATNSSSASSTTSPLSFSFNQSSNPSSTGFGFGSSVSSTPASSTTPS. The segment covering 79–218 has biased composition (low complexity); it reads GFGSSASSST…ASSSAATSTS (140 aa). Positions 79-245 are disordered; sequence GFGSSASSST…VASSAPGSSS (167 aa). Positions 232–245 are enriched in low complexity; that stretch reads PSFSVASSAPGSSS. Tandem repeats lie at residues 248-249, 271-272, 280-281, 308-309, and 366-367. Disordered stretches follow at residues 281 to 329, 341 to 366, and 399 to 418; these read GSSS…ASPF, TASS…SFSF, and TTTS…SAPA. 2 repeat units span residues 426–427 and 449–450. Positions 471–533 are disordered; it reads KTSTPASSSQ…AVAPVAGSPK (63 aa). Low complexity predominate over residues 472–519; that stretch reads TSTPASSSQPQTTSPAFSFSLPSSTSTTAPATSSATTTQTTLVVPSSS. A coiled-coil region spans residues 584–674; it reads RLEIEVAKVV…IRSIIQSVNA (91 aa).

It belongs to the nucleoporin NSP1/NUP62 family. As to quaternary structure, part of the nuclear pore complex (NPC). The NPC has an eight-fold symmetrical structure comprising a central transport channel and two rings, the cytoplasmic and nuclear rings, to which eight filaments are attached. The cytoplasmic filaments have loose ends, while the nuclear filaments are joined in a distal ring, forming a nuclear basket. NPCs are highly dynamic in configuration and composition, and can be devided in 3 subcomplexes, the NUP62 subcomplex, the NUP107-160 subcomplex and the NUP93 subcomplex, containing approximately 30 different nucleoporin proteins. Interacts with NUP58 and the importin KPNB1.

The protein resides in the nucleus envelope. It localises to the nucleus. It is found in the nuclear pore complex. The polypeptide is Nuclear pore complex protein NUP62 (Arabidopsis thaliana (Mouse-ear cress)).